Reading from the N-terminus, the 254-residue chain is NAD-dependent protein deacylase (254 aa).

In terms of domain architecture, Deacetylase sirtuin-type spans 1 to 250 (MERLEEARKR…LPPSPEDQAE (250 aa)). 22–41 (GAGISKPSGIPTFRDAEGLW) serves as a coordination point for NAD(+). Residues Tyr-66 and Arg-69 each contribute to the substrate site. 104-107 (QNVD) provides a ligand contact to NAD(+). Catalysis depends on His-122, which acts as the Proton acceptor. Cys-130, Cys-133, Cys-149, and Cys-152 together coordinate Zn(2+). NAD(+) is bound by residues 189–191 (GTS), 215–217 (NPE), and Ala-233.

This sequence belongs to the sirtuin family. Class III subfamily. Zn(2+) serves as cofactor.

The protein localises to the cytoplasm. The enzyme catalyses N(6)-acetyl-L-lysyl-[protein] + NAD(+) + H2O = 2''-O-acetyl-ADP-D-ribose + nicotinamide + L-lysyl-[protein]. It catalyses the reaction N(6)-succinyl-L-lysyl-[protein] + NAD(+) + H2O = 2''-O-succinyl-ADP-D-ribose + nicotinamide + L-lysyl-[protein]. NAD-dependent lysine deacetylase and desuccinylase that specifically removes acetyl and succinyl groups on target proteins. Modulates the activities of several proteins which are inactive in their acylated form. This chain is NAD-dependent protein deacylase, found in Thermus thermophilus (strain ATCC 27634 / DSM 579 / HB8).